The chain runs to 176 residues: Magnesium-dependent phosphatase 1 (176 aa).

Asp11 (nucleophile) is an active-site residue. Asp11 provides a ligand contact to Mg(2+). Leu12 and Asp13 together coordinate phosphate. Asp13 serves as a coordination point for Mg(2+). Asp13 serves as the catalytic Proton donor. Trp20 is a binding site for substrate. Residues Ser69, Arg70, and Lys100 each coordinate phosphate. A substrate-binding site is contributed by Arg70. Mg(2+) is bound at residue Asp123.

This sequence belongs to the HAD-like hydrolase superfamily. The cofactor is Mg(2+).

It catalyses the reaction O-phospho-L-tyrosyl-[protein] + H2O = L-tyrosyl-[protein] + phosphate. With respect to regulation, inhibited by vanadate and zinc, and slightly by calcium. Magnesium-dependent phosphatase which may act as a tyrosine phosphatase. This chain is Magnesium-dependent phosphatase 1 (MDP1), found in Homo sapiens (Human).